The chain runs to 463 residues: Tryprostatin B synthase (463 aa).

Brevianamide F is bound by residues methionine 93 and glutamate 101. Dimethylallyl diphosphate-binding residues include arginine 112, lysine 200, and tyrosine 202. Tyrosine 204 serves as a coordination point for brevianamide F. Dimethylallyl diphosphate is bound by residues lysine 293, tyrosine 295, glutamine 379, tyrosine 381, tyrosine 445, and tyrosine 449.

It belongs to the tryptophan dimethylallyltransferase family.

It carries out the reaction brevianamide F + dimethylallyl diphosphate = tryprostatin B + diphosphate. It functions in the pathway mycotoxin biosynthesis. Its function is as follows. Brevianamide F prenyltransferase; part of the gene cluster that mediates the biosynthesis of fumitremorgins, indole alkaloids that carry not only intriguing chemical structures, but also interesting biological and pharmacological activities. The biosynthesis of fumitremorgin-type alkaloids begins by condensation of the two amino acids L-tryptophan and L-proline to brevianamide F, catalyzed by the non-ribosomal peptide synthetase ftmPS/ftmA. Brevianamide F is then prenylated by the prenyltransferase ftmPT1/ftmB in the presence of dimethylallyl diphosphate, resulting in the formation of tryprostatin B. The three cytochrome P450 monooxygenases, ftmP450-1/ftmC, ftmP450-2/ftmE and ftmP450-3/FtmG, are responsible for the conversion of tryprostatin B to 6-hydroxytryprostatin B, tryprostatin A to fumitremorgin C and fumitremorgin C to 12,13-dihydroxyfumitremorgin C, respectively. The putative methyltransferase ftmMT/ftmD is expected for the conversion of 6-hydroxytryprostatin B to tryprostatin A. FtmPT2/FtmH catalyzes the prenylation of 12,13-dihydroxyfumitre-morgin C in the presence of dimethylallyl diphosphate, resulting in the formation of fumitremorgin B. Fumitremorgin B is further converted to verruculogen by ftmOx1/ftmF via the insertion of an endoperoxide bond between the two prenyl moieties. Finally, verruculogen is further converted to fumitremorgin A by the verruculogen prenyltransferase ftmPT3. The protein is Tryprostatin B synthase of Neosartorya fischeri (strain ATCC 1020 / DSM 3700 / CBS 544.65 / FGSC A1164 / JCM 1740 / NRRL 181 / WB 181) (Aspergillus fischerianus).